Here is a 380-residue protein sequence, read N- to C-terminus: Transcription factor RF2a (380 aa).

The disordered stretch occupies residues 1–57 (MNREKSPIPGDGGDGLPPQATRRAGPPAAAAAAEYDISRMPDFPTRNPGHRRAHSEI). Positions 16 to 33 (LPPQATRRAGPPAAAAAA) are enriched in low complexity. Residues 56-108 (EILSLPEDLDLCAAGGGDGPSLSDENDEELFSMFLDVEKLNSTCGASSEAEAE) form an activation of RTBV promoter region. Residues 181–244 (DPKRAKRIWA…SGLTTENSEL (64 aa)) form the bZIP domain. The interval 183–204 (KRAKRIWANRQSAARSKERKMR) is basic motif. The segment at 209–244 (LERKVQTLQTEATTLSAQLALLQRDTSGLTTENSEL) is leucine-zipper. Residues 283 to 357 (GGMMMNFGGM…AQQLQQAARD (75 aa)) form an interaction with TBP2 region. Residues 326 to 355 (QAQQQQVLHPQHQQQQPLHPLQAQQLQQAA) are compositionally biased toward low complexity. A disordered region spans residues 326–380 (QAQQQQVLHPQHQQQQPLHPLQAQQLQQAARDLKMKSPMGGQSQWGDGKSGSSGN).

It belongs to the bZIP family. As to quaternary structure, binds DNA as a homodimer or as a heterodimer with RF2b. The heterodimer binds stronger to DNA than the homodimer. Interacts with TBP2. As to expression, expressed at high levels in levels in leaf sheath, moderate levels in leaf blade, but not in roots. Predominantly expressed in vascular tissues.

It localises to the nucleus. In terms of biological role, transcription factor probably involved in vascular development and shoot tissue organization. Binds to the DNA sequence 5'-CCGAGTGTGCCCCTGG-3' present in the promoter region Box II of the phloem-specific rice tungro bacilliform virus (RTBV) promoter. May regulate tissue-specific expression of the RTBV promoter and virus replication. This is Transcription factor RF2a (RF2a) from Oryza sativa subsp. japonica (Rice).